Consider the following 185-residue polypeptide: Elongation factor P (185 aa).

This sequence belongs to the elongation factor P family.

It localises to the cytoplasm. The protein operates within protein biosynthesis; polypeptide chain elongation. In terms of biological role, involved in peptide bond synthesis. Stimulates efficient translation and peptide-bond synthesis on native or reconstituted 70S ribosomes in vitro. Probably functions indirectly by altering the affinity of the ribosome for aminoacyl-tRNA, thus increasing their reactivity as acceptors for peptidyl transferase. The sequence is that of Elongation factor P from Thermotoga petrophila (strain ATCC BAA-488 / DSM 13995 / JCM 10881 / RKU-1).